A 111-amino-acid polypeptide reads, in one-letter code: Inner membrane protein H108R (111 aa).

A helical membrane pass occupies residues 10-32; the sequence is LIVIITILITTRELSTTMLIVSL. N65 carries an N-linked (GlcNAc...) asparagine; by host glycan.

The protein belongs to the asfivirus H108R family.

The protein resides in the virion membrane. This chain is Inner membrane protein H108R, found in African swine fever virus (isolate Tick/Malawi/Lil 20-1/1983) (ASFV).